Reading from the N-terminus, the 151-residue chain is Transcriptional regulator MraZ (151 aa).

SpoVT-AbrB domains lie at Ala5–Glu52 and Ala81–Ala124.

It belongs to the MraZ family. As to quaternary structure, forms oligomers.

The protein resides in the cytoplasm. It is found in the nucleoid. The polypeptide is Transcriptional regulator MraZ (Pseudomonas putida (strain W619)).